We begin with the raw amino-acid sequence, 336 residues long: Glycerol-3-phosphate dehydrogenase [NAD(P)+] (336 aa).

NADPH-binding residues include W16 and K109. Sn-glycerol 3-phosphate is bound by residues K109, G137, and S139. A141 provides a ligand contact to NADPH. Sn-glycerol 3-phosphate is bound by residues K192, D245, S255, R256, and N257. Catalysis depends on K192, which acts as the Proton acceptor. R256 provides a ligand contact to NADPH. The NADPH site is built by V280 and E282.

This sequence belongs to the NAD-dependent glycerol-3-phosphate dehydrogenase family.

It localises to the cytoplasm. It catalyses the reaction sn-glycerol 3-phosphate + NAD(+) = dihydroxyacetone phosphate + NADH + H(+). The catalysed reaction is sn-glycerol 3-phosphate + NADP(+) = dihydroxyacetone phosphate + NADPH + H(+). It participates in membrane lipid metabolism; glycerophospholipid metabolism. In terms of biological role, catalyzes the reduction of the glycolytic intermediate dihydroxyacetone phosphate (DHAP) to sn-glycerol 3-phosphate (G3P), the key precursor for phospholipid synthesis. This Hyphomonas neptunium (strain ATCC 15444) protein is Glycerol-3-phosphate dehydrogenase [NAD(P)+].